The sequence spans 216 residues: Serine acetyltransferase (216 aa).

This sequence belongs to the transferase hexapeptide repeat family.

It is found in the cytoplasm. The enzyme catalyses L-serine + acetyl-CoA = O-acetyl-L-serine + CoA. Its pathway is amino-acid biosynthesis; L-cysteine biosynthesis; L-cysteine from L-serine: step 1/2. With respect to regulation, inhibited by cysteine. Catalyzes the acetylation of serine by acetyl-CoA to produce O-acetylserine (OAS). The protein is Serine acetyltransferase of Bacillus licheniformis (strain ATCC 14580 / DSM 13 / JCM 2505 / CCUG 7422 / NBRC 12200 / NCIMB 9375 / NCTC 10341 / NRRL NRS-1264 / Gibson 46).